Here is a 293-residue protein sequence, read N- to C-terminus: Ribosomal RNA small subunit methyltransferase H (293 aa).

S-adenosyl-L-methionine contacts are provided by residues 34–36 (GGH), Asp-54, Leu-86, Asp-101, and Gln-108.

Belongs to the methyltransferase superfamily. RsmH family.

Its subcellular location is the cytoplasm. The catalysed reaction is cytidine(1402) in 16S rRNA + S-adenosyl-L-methionine = N(4)-methylcytidine(1402) in 16S rRNA + S-adenosyl-L-homocysteine + H(+). Functionally, specifically methylates the N4 position of cytidine in position 1402 (C1402) of 16S rRNA. This chain is Ribosomal RNA small subunit methyltransferase H, found in Elusimicrobium minutum (strain Pei191).